The chain runs to 119 residues: Protein TusC (119 aa).

This sequence belongs to the DsrF/TusC family. In terms of assembly, heterohexamer, formed by a dimer of trimers. The hexameric TusBCD complex contains 2 copies each of TusB, TusC and TusD. The TusBCD complex interacts with TusE.

Its subcellular location is the cytoplasm. Its function is as follows. Part of a sulfur-relay system required for 2-thiolation of 5-methylaminomethyl-2-thiouridine (mnm(5)s(2)U) at tRNA wobble positions. This is Protein TusC from Escherichia fergusonii (strain ATCC 35469 / DSM 13698 / CCUG 18766 / IAM 14443 / JCM 21226 / LMG 7866 / NBRC 102419 / NCTC 12128 / CDC 0568-73).